Consider the following 485-residue polypeptide: uncharacterized protein (485 aa).

Positions 1–23 are cleaved as a signal peptide; the sequence is MRRRVCTVVRAVVCLLSTSLLTT. A lipid anchor (N-palmitoyl cysteine) is attached at Cys-24. Cys-24 carries S-diacylglycerol cysteine lipidation. The segment covering 308-327 has biased composition (low complexity); sequence SAASSPAQCPSSPSSSSSSS. The tract at residues 308 to 331 is disordered; sequence SAASSPAQCPSSPSSSSSSSTNAG.

The protein belongs to the TP013X lipoprotein family.

Its subcellular location is the cell membrane. This is an uncharacterized protein from Treponema pallidum (strain Nichols).